The sequence spans 150 residues: Large ribosomal subunit protein bL9 (150 aa).

The protein belongs to the bacterial ribosomal protein bL9 family.

Binds to the 23S rRNA. The chain is Large ribosomal subunit protein bL9 from Renibacterium salmoninarum (strain ATCC 33209 / DSM 20767 / JCM 11484 / NBRC 15589 / NCIMB 2235).